A 182-amino-acid polypeptide reads, in one-letter code: Glycerol-3-phosphate acyltransferase 1 (182 aa).

The next 5 helical transmembrane spans lie at 5-25 (MQFL…AYIV), 54-74 (GYFI…VSIA), 81-101 (STFV…PIVF), 117-137 (IAFD…FYLI), and 157-177 (ILYS…VLIL).

Belongs to the PlsY family. In terms of assembly, probably interacts with PlsX.

It localises to the cell membrane. The catalysed reaction is an acyl phosphate + sn-glycerol 3-phosphate = a 1-acyl-sn-glycero-3-phosphate + phosphate. The protein operates within lipid metabolism; phospholipid metabolism. Its function is as follows. Catalyzes the transfer of an acyl group from acyl-phosphate (acyl-PO(4)) to glycerol-3-phosphate (G3P) to form lysophosphatidic acid (LPA). This enzyme utilizes acyl-phosphate as fatty acyl donor, but not acyl-CoA or acyl-ACP. The sequence is that of Glycerol-3-phosphate acyltransferase 1 from Bacillus cereus (strain ATCC 10987 / NRS 248).